The following is a 262-amino-acid chain: Thiazole synthase (262 aa).

Lys97 serves as the catalytic Schiff-base intermediate with DXP. Residues Gly158, 185–186, and 207–208 each bind 1-deoxy-D-xylulose 5-phosphate; these read AG and NT. Residues 243–262 form a disordered region; the sequence is DKAQASTPTVGQPFWHSAEY.

The protein belongs to the ThiG family. Homotetramer. Forms heterodimers with either ThiH or ThiS.

Its subcellular location is the cytoplasm. The catalysed reaction is [ThiS sulfur-carrier protein]-C-terminal-Gly-aminoethanethioate + 2-iminoacetate + 1-deoxy-D-xylulose 5-phosphate = [ThiS sulfur-carrier protein]-C-terminal Gly-Gly + 2-[(2R,5Z)-2-carboxy-4-methylthiazol-5(2H)-ylidene]ethyl phosphate + 2 H2O + H(+). The protein operates within cofactor biosynthesis; thiamine diphosphate biosynthesis. Catalyzes the rearrangement of 1-deoxy-D-xylulose 5-phosphate (DXP) to produce the thiazole phosphate moiety of thiamine. Sulfur is provided by the thiocarboxylate moiety of the carrier protein ThiS. In vitro, sulfur can be provided by H(2)S. The sequence is that of Thiazole synthase from Neisseria meningitidis serogroup B (strain ATCC BAA-335 / MC58).